The following is a 381-amino-acid chain: Putative glutamate--cysteine ligase 2 (381 aa).

This sequence belongs to the glutamate--cysteine ligase type 2 family. YbdK subfamily.

The enzyme catalyses L-cysteine + L-glutamate + ATP = gamma-L-glutamyl-L-cysteine + ADP + phosphate + H(+). Functionally, ATP-dependent carboxylate-amine ligase which exhibits weak glutamate--cysteine ligase activity. The polypeptide is Putative glutamate--cysteine ligase 2 (Polaromonas naphthalenivorans (strain CJ2)).